Consider the following 224-residue polypeptide: UPF0758 protein VIBHAR_00653 (224 aa).

In terms of domain architecture, MPN spans 102–224 (ALTSPEQTKL…SVSFAERGWI (123 aa)). Zn(2+)-binding residues include histidine 173, histidine 175, and aspartate 186. Positions 173-186 (HNHPSGVAEPSQAD) match the JAMM motif motif.

It belongs to the UPF0758 family.

The sequence is that of UPF0758 protein VIBHAR_00653 from Vibrio campbellii (strain ATCC BAA-1116).